The chain runs to 130 residues: Small ribosomal subunit protein uS9 (130 aa).

Residues 105 to 115 (TRDSRQVERKK) show a composition bias toward basic and acidic residues. Residues 105–130 (TRDSRQVERKKVGFRKSRKRTQFSKR) form a disordered region. Residues 116–130 (VGFRKSRKRTQFSKR) show a composition bias toward basic residues.

This sequence belongs to the universal ribosomal protein uS9 family.

This is Small ribosomal subunit protein uS9 from Buchnera aphidicola subsp. Schizaphis graminum (strain Sg).